Here is a 255-residue protein sequence, read N- to C-terminus: 1-(5-phosphoribosyl)-5-[(5-phosphoribosylamino)methylideneamino] imidazole-4-carboxamide isomerase (255 aa).

Asp8 serves as the catalytic Proton acceptor. Catalysis depends on Asp129, which acts as the Proton donor.

Belongs to the HisA/HisF family.

The protein resides in the cytoplasm. The enzyme catalyses 1-(5-phospho-beta-D-ribosyl)-5-[(5-phospho-beta-D-ribosylamino)methylideneamino]imidazole-4-carboxamide = 5-[(5-phospho-1-deoxy-D-ribulos-1-ylimino)methylamino]-1-(5-phospho-beta-D-ribosyl)imidazole-4-carboxamide. The protein operates within amino-acid biosynthesis; L-histidine biosynthesis; L-histidine from 5-phospho-alpha-D-ribose 1-diphosphate: step 4/9. This chain is 1-(5-phosphoribosyl)-5-[(5-phosphoribosylamino)methylideneamino] imidazole-4-carboxamide isomerase, found in Synechococcus sp. (strain CC9605).